A 268-amino-acid polypeptide reads, in one-letter code: tRNA pseudouridine synthase A (268 aa).

The Nucleophile role is filled by Asp-63. Tyr-122 is a substrate binding site.

The protein belongs to the tRNA pseudouridine synthase TruA family. As to quaternary structure, homodimer.

It catalyses the reaction uridine(38/39/40) in tRNA = pseudouridine(38/39/40) in tRNA. Formation of pseudouridine at positions 38, 39 and 40 in the anticodon stem and loop of transfer RNAs. This Treponema denticola (strain ATCC 35405 / DSM 14222 / CIP 103919 / JCM 8153 / KCTC 15104) protein is tRNA pseudouridine synthase A.